The sequence spans 671 residues: Kinesin-like protein KIF2C (671 aa).

Residues 1–200 (MIDFDDVAAI…CHPLTMTDPI (200 aa)) form a globular region. Positions 36 to 62 (KQKRRSVNSKIPAPKESLRTRSTRMST) are disordered. Phosphoserine; by AURKB is present on S41. A Microtubule tip localization signal motif is present at residues 44–47 (SKIP). S52, S57, S61, S112, S121, S133, and S138 each carry phosphoserine. Residues 153 to 184 (EKKAQNSEMRMKRAQEYDSSFPNWEFARMIKE) are negative regulator of microtubule-binding. Cystine bridges form between C191–C233 and C290–C506. A Kinesin motor domain is found at 204–534 (RICVCVRKRP…LRYADRVKEL (331 aa)). ATP is bound at residue 294-301 (GQTGSGKT). A phosphoserine mark is found at S465, S567, and S579. The stretch at 564 to 604 (GNLSKEEEELSSQMSSFNEAMTQIRELEERAVEELKEIIQQ) forms a coiled coil.

It belongs to the TRAFAC class myosin-kinesin ATPase superfamily. Kinesin family. MCAK/KIF2 subfamily. In terms of assembly, interacts with CENPH. Interacts with MTUS2/TIP150; the interaction is direct. Interacts with MAPRE1; the interaction is direct, regulated by phosphorylation and is probably required for targeting to growing microtubule plus ends. Interacts with KIF18B at microtubule tips; this interaction increases the affinity of both partners for microtubule plus ends and is required for robust microtubule depolymerization. Phosphorylation by AURKA or AURKB strongly reduces KIF18B-binding. In terms of processing, phosphorylation by AURKB, regulates association with centromeres and kinetochores and the microtubule depolymerization activity. Post-translationally, ubiquitinated.

Its subcellular location is the cytoplasm. It is found in the cytoskeleton. It localises to the nucleus. The protein resides in the chromosome. The protein localises to the centromere. Its subcellular location is the kinetochore. In terms of biological role, in complex with KIF18B, constitutes the major microtubule plus-end depolymerizing activity in mitotic cells. Regulates the turnover of microtubules at the kinetochore and functions in chromosome segregation during mitosis. Plays a role in chromosome congression and is required for the lateral to end-on conversion of the chromosome-microtubule attachment. The protein is Kinesin-like protein KIF2C (KIF2C) of Macaca fascicularis (Crab-eating macaque).